Consider the following 885-residue polypeptide: Chromatin structure-remodeling complex protein RSC3 (885 aa).

Positions 14 to 42 (CVQCRKRKIGCDRVKPICGNCMKHNKMDC) form a DNA-binding region, zn(2)-C6 fungal-type. S95 and S236 each carry phosphoserine.

In terms of assembly, forms a heteromer with RSC30. Interacts with LDB7 and NPL6. Component of the two forms of the RSC complex composed of at least either RSC1 or RSC2, and ARP7, ARP9, LDB7, NPL6, RSC3, RSC30, RSC4, RSC58, RSC6, RSC8, RSC9, SFH1, STH1, HTL1 and probably RTT102. The complexes interact with histone and histone variant components of centromeric chromatin. Component of a fungal-specific module (HTL1-LDB7-NPL6-RSC3-RSC30) within the RSC complex.

The protein resides in the nucleus. In terms of biological role, component of the chromatin structure-remodeling complex (RSC), which is involved in transcription regulation and nucleosome positioning. RSC is responsible for the transfer of a histone octamer from a nucleosome core particle to naked DNA. The reaction requires ATP and involves an activated RSC-nucleosome intermediate. Remodeling reaction also involves DNA translocation, DNA twist and conformational change. As a reconfigurer of centromeric and flanking nucleosomes, RSC complex is required both for proper kinetochore function in chromosome segregation and, via a PKC1-dependent signaling pathway, for organization of the cellular cytoskeleton. This subunit is required for transcription of ribosomal protein genes and genes involved in the integrity of the cell wall, and also for proper metaphase progression. Together with HTL1, LDB7, NPL6, RSC30 components, defines a fungal-specific module within the RSC complex that plays a role in many cellular functions including the maintenance of cell wall integrity. This Saccharomyces cerevisiae (strain ATCC 204508 / S288c) (Baker's yeast) protein is Chromatin structure-remodeling complex protein RSC3 (RSC3).